The chain runs to 286 residues: ATP synthase gamma chain (286 aa).

This sequence belongs to the ATPase gamma chain family. As to quaternary structure, F-type ATPases have 2 components, CF(1) - the catalytic core - and CF(0) - the membrane proton channel. CF(1) has five subunits: alpha(3), beta(3), gamma(1), delta(1), epsilon(1). CF(0) has three main subunits: a, b and c.

The protein resides in the cell inner membrane. Produces ATP from ADP in the presence of a proton gradient across the membrane. The gamma chain is believed to be important in regulating ATPase activity and the flow of protons through the CF(0) complex. The chain is ATP synthase gamma chain from Pseudomonas putida (strain W619).